We begin with the raw amino-acid sequence, 51 residues long: Insulin (51 aa).

3 disulfides stabilise this stretch: C7/C37, C19/C50, and C36/C41.

This sequence belongs to the insulin family. In terms of assembly, heterodimer of a B chain and an A chain linked by two disulfide bonds.

The protein resides in the secreted. Insulin decreases blood glucose concentration. It increases cell permeability to monosaccharides, amino acids and fatty acids. It accelerates glycolysis, the pentose phosphate cycle, and glycogen synthesis in liver. This chain is Insulin (INS), found in Alligator mississippiensis (American alligator).